We begin with the raw amino-acid sequence, 230 residues long: Ribose-5-phosphate isomerase A (230 aa).

Substrate-binding positions include 31-34 (TGST), 88-91 (DGSD), and 101-104 (KGGG). Glu-110 serves as the catalytic Proton acceptor. Lys-128 contacts substrate.

This sequence belongs to the ribose 5-phosphate isomerase family. As to quaternary structure, homodimer.

It carries out the reaction aldehydo-D-ribose 5-phosphate = D-ribulose 5-phosphate. The protein operates within carbohydrate degradation; pentose phosphate pathway; D-ribose 5-phosphate from D-ribulose 5-phosphate (non-oxidative stage): step 1/1. Its function is as follows. Catalyzes the reversible conversion of ribose-5-phosphate to ribulose 5-phosphate. This is Ribose-5-phosphate isomerase A from Lactobacillus acidophilus (strain ATCC 700396 / NCK56 / N2 / NCFM).